The chain runs to 184 residues: Putative manganese efflux pump MntP (184 aa).

The next 6 helical transmembrane spans lie at 12 to 32, 39 to 59, 63 to 83, 99 to 119, 132 to 152, and 164 to 184; these read SIMA…MGMI, IIYI…FGML, LLSG…LLVL, FIAP…LDSF, VWMT…LGLL, and YSGA…LFPL.

This sequence belongs to the MntP (TC 9.B.29) family.

Its subcellular location is the cell membrane. Probably functions as a manganese efflux pump. This chain is Putative manganese efflux pump MntP, found in Bacillus pumilus (strain SAFR-032).